Here is a 500-residue protein sequence, read N- to C-terminus: NAD(P)H-quinone oxidoreductase chain 4, chloroplastic (500 aa).

15 helical membrane passes run 4–24 (FYWLTIIVVLPISAGSLIALL), 35–55 (YTICICLFELLLTTYVFCYHF), 80–100 (LGIDGLSIGPILLTGFITTLA), 113–130 (LFHFLMLAMYSGQIGSFS), 134–154 (LLLFFIMWELELIPVYLLLSM), 167–187 (FILYTAGGSIFLLMGVLGMGL), 208–228 (ALEIIFYFGFLIAYAVKSPII), 242–262 (HYSTCMLLAGILLKMGAYGLV), 274–294 (SIFSPWLMIVGTIQIIYAALT), 305–325 (IAYSSVSHMGFIIIGISSITD), 330–350 (GAILQIISHGFIGAALFFLAG), 364–384 (MGGIAILMPRIFTMFSSFSMA), 386–406 (LALPGMSGFVAEFVIFLGIIT), 416–436 (ILITFVMAIGMILTPIYSLSM), and 462–482 (IFIFMCILLPIIGIGIYPDFV).

This sequence belongs to the complex I subunit 4 family.

The protein resides in the plastid. It is found in the chloroplast thylakoid membrane. It carries out the reaction a plastoquinone + NADH + (n+1) H(+)(in) = a plastoquinol + NAD(+) + n H(+)(out). The catalysed reaction is a plastoquinone + NADPH + (n+1) H(+)(in) = a plastoquinol + NADP(+) + n H(+)(out). The protein is NAD(P)H-quinone oxidoreductase chain 4, chloroplastic of Nymphaea alba (White water-lily).